The primary structure comprises 311 residues: Small ribosomal subunit biogenesis GTPase RsgA (311 aa).

The region spanning 77–239 is the CP-type G domain; that stretch reads LSKQSHIIAT…IIDTPGIKGF (163 aa). Residues 126–129 and 180–188 each bind GTP; these read NKTD and GHSGVGKST. Zn(2+) is bound by residues C263, C268, H270, and C276.

The protein belongs to the TRAFAC class YlqF/YawG GTPase family. RsgA subfamily. As to quaternary structure, monomer. Associates with 30S ribosomal subunit, binds 16S rRNA. Zn(2+) is required as a cofactor.

Its subcellular location is the cytoplasm. In terms of biological role, one of several proteins that assist in the late maturation steps of the functional core of the 30S ribosomal subunit. Helps release RbfA from mature subunits. May play a role in the assembly of ribosomal proteins into the subunit. Circularly permuted GTPase that catalyzes slow GTP hydrolysis, GTPase activity is stimulated by the 30S ribosomal subunit. This chain is Small ribosomal subunit biogenesis GTPase RsgA, found in Azobacteroides pseudotrichonymphae genomovar. CFP2.